Here is a 484-residue protein sequence, read N- to C-terminus: Ubiquinone biosynthesis monooxygenase COQ6, mitochondrial (484 aa).

Residues 1–41 constitute a mitochondrion transit peptide; sequence MLSLAKAKLAVVGIGRQCVAVRTLNGARAVHRSFSSSEHDQ.

This sequence belongs to the UbiH/COQ6 family. As to quaternary structure, component of a multi-subunit COQ enzyme complex, composed of at least coq3, coq4, coq5, coq6, coq7 and coq9. Interacts with coq8b and coq7. FAD is required as a cofactor.

It is found in the mitochondrion inner membrane. Its subcellular location is the golgi apparatus. The protein localises to the cell projection. It carries out the reaction a 4-hydroxy-3-(all-trans-polyprenyl)benzoate + 2 reduced [2Fe-2S]-[ferredoxin] + O2 + 2 H(+) = a 3,4-dihydroxy-5-(all-trans-polyprenyl)benzoate + 2 oxidized [2Fe-2S]-[ferredoxin] + H2O. It catalyses the reaction a 2-methoxy-6-(all-trans-polyprenyl)phenol + 2 reduced [2Fe-2S]-[ferredoxin] + O2 + 2 H(+) = a 2-methoxy-6-(all-trans-polyprenyl)benzene-1,4-diol + 2 oxidized [2Fe-2S]-[ferredoxin] + H2O. The protein operates within cofactor biosynthesis; ubiquinone biosynthesis. In terms of biological role, FAD-dependent monooxygenase required for two non-consecutive steps during ubiquinone biosynthesis. Required for the C5-ring hydroxylation during ubiquinone biosynthesis by catalyzing the hydroxylation of 4-hydroxy-3-(all-trans-polyprenyl)benzoic acid to 3,4-dihydroxy-5-(all-trans-polyprenyl)benzoic acid. Also acts downstream of coq4, for the C1-hydroxylation during ubiquinone biosynthesis by catalyzing the hydroxylation of 2-methoxy-6-(all-trans-polyprenyl)phenol to 2-methoxy-6-(all-trans-polyprenyl)benzene-1,4-diol. The electrons required for the hydroxylation reaction are funneled indirectly to coq6 from NADPH via a ferredoxin/ferredoxin reductase system. This chain is Ubiquinone biosynthesis monooxygenase COQ6, mitochondrial, found in Danio rerio (Zebrafish).